We begin with the raw amino-acid sequence, 27 residues long: uncharacterized protein (27 aa).

It localises to the plastid. It is found in the chloroplast. This is an uncharacterized protein from Marchantia polymorpha (Common liverwort).